Consider the following 565-residue polypeptide: Adenine deaminase (565 aa).

It belongs to the metallo-dependent hydrolases superfamily. Adenine deaminase family. Mn(2+) serves as cofactor.

The enzyme catalyses adenine + H2O + H(+) = hypoxanthine + NH4(+). This chain is Adenine deaminase, found in Sinorhizobium fredii (strain NBRC 101917 / NGR234).